The chain runs to 343 residues: Cilia- and flagella-associated protein 36 (343 aa).

Ser-85 and Ser-147 each carry phosphoserine. The stretch at Ser-147–Ser-181 forms a coiled coil. The interval Lys-165–Tyr-191 is disordered. At Ser-201 the chain carries Phosphoserine. Residues Ser-286–Lys-323 are disordered. Basic and acidic residues predominate over residues Gln-301–Lys-323.

Belongs to the CFAP36 family. In terms of assembly, interacts with ARL3. Widely expressed (at protein level).

It localises to the nucleus. It is found in the cytoplasm. The protein localises to the cell projection. The protein resides in the cilium. Its subcellular location is the flagellum. May act as an effector for ARL3. The sequence is that of Cilia- and flagella-associated protein 36 from Rattus norvegicus (Rat).